The chain runs to 838 residues: Leucine--tRNA ligase (838 aa).

A 'HIGH' region motif is present at residues 38-48 (PYPSGKAHVGH). The short motif at 608-612 (KMSKS) is the 'KMSKS' region element. Lys-611 contributes to the ATP binding site.

The protein belongs to the class-I aminoacyl-tRNA synthetase family.

It localises to the cytoplasm. It carries out the reaction tRNA(Leu) + L-leucine + ATP = L-leucyl-tRNA(Leu) + AMP + diphosphate. This Orientia tsutsugamushi (strain Boryong) (Rickettsia tsutsugamushi) protein is Leucine--tRNA ligase.